The chain runs to 338 residues: Tetraacyldisaccharide 4'-kinase (338 aa).

Threonine 63–threonine 70 contacts ATP.

The protein belongs to the LpxK family.

It carries out the reaction a lipid A disaccharide + ATP = a lipid IVA + ADP + H(+). The protein operates within glycolipid biosynthesis; lipid IV(A) biosynthesis; lipid IV(A) from (3R)-3-hydroxytetradecanoyl-[acyl-carrier-protein] and UDP-N-acetyl-alpha-D-glucosamine: step 6/6. In terms of biological role, transfers the gamma-phosphate of ATP to the 4'-position of a tetraacyldisaccharide 1-phosphate intermediate (termed DS-1-P) to form tetraacyldisaccharide 1,4'-bis-phosphate (lipid IVA). The sequence is that of Tetraacyldisaccharide 4'-kinase from Hahella chejuensis (strain KCTC 2396).